We begin with the raw amino-acid sequence, 226 residues long: DELTA-thalatoxin-Avl1b (226 aa).

A signal peptide spans 1 to 21 (MRHFVVFLYMFLALSIPTAFA). A propeptide spanning residues 22–45 (KKHIVTKKGNHQDITNDNEGENAE) is cleaved from the precursor. Residues 50–59 (AVAGAVIAGG) form a plays an important role in the hemolytic activity region. Positions 58-77 (GGELALKILTKILDEIGKID) are N-terminal region. Residues Ser101, Val134, Ser152, Pro154, Tyr180, and Tyr184 each coordinate phosphocholine. Residues 152-167 (SVPFDYNLYTNWWNVK) form a trp-rich region, which is important for the binding to lipid membrane region. Positions 191–193 (KPS) match the Cell attachment site, crucial for protein stability motif.

This sequence belongs to the actinoporin family. Sea anemone subfamily. As to quaternary structure, octamer or nonamer in membranes. Monomer in the soluble state.

It localises to the secreted. The protein resides in the nematocyst. The protein localises to the target cell membrane. Functionally, pore-forming protein that forms cations-selective hydrophilic pores of around 1 nm and causes cytolysis. Pore formation is a multi-step process that involves specific recognition of membrane sphingomyelin (but neither cholesterol nor phosphatidylcholine) using aromatic rich region and adjacent phosphocholine (POC) binding site, firm binding to the membrane (mainly driven by hydrophobic interactions) accompanied by the transfer of the N-terminal region to the lipid-water interface and finally pore formation after oligomerization of monomers. The chain is DELTA-thalatoxin-Avl1b from Actineria villosa (Okinawan sea anemone).